The following is a 192-amino-acid chain: uncharacterized protein (192 aa).

The first 17 residues, 1-17 (MFLHLILLAGLAPVVYL), serve as a signal peptide directing secretion.

This is an uncharacterized protein from Caenorhabditis elegans.